A 205-amino-acid chain; its full sequence is Large ribosomal subunit protein uL10 (205 aa).

Residues 167–205 (AQGAAPAEAKAEAPASEEKAADTPAEQPAESAPEAAPEA) are disordered. 2 stretches are compositionally biased toward low complexity: residues 169 to 180 (GAAPAEAKAEAP) and 190 to 205 (PAEQ…APEA).

This sequence belongs to the universal ribosomal protein uL10 family. In terms of assembly, part of the ribosomal stalk of the 50S ribosomal subunit. The N-terminus interacts with L11 and the large rRNA to form the base of the stalk. The C-terminus forms an elongated spine to which L12 dimers bind in a sequential fashion forming a multimeric L10(L12)X complex.

Functionally, forms part of the ribosomal stalk, playing a central role in the interaction of the ribosome with GTP-bound translation factors. This chain is Large ribosomal subunit protein uL10, found in Treponema denticola (strain ATCC 35405 / DSM 14222 / CIP 103919 / JCM 8153 / KCTC 15104).